The sequence spans 250 residues: Putative endonuclease (250 aa).

In terms of biological role, putative endonuclease. This is Putative endonuclease from Escherichia coli (Enterobacteria phage T5).